A 164-amino-acid chain; its full sequence is uncharacterized protein (164 aa).

The protein localises to the mitochondrion. This is an uncharacterized protein from Arabidopsis thaliana (Mouse-ear cress).